The chain runs to 518 residues: Triacylglycerol lipase OBL1 (518 aa).

The chain crosses the membrane as a helical span at residues 93 to 113 (GFVVDFFLNLFSANGGFFGLL). The short motif at 337 to 341 (GHSLG) is the GXSXG element. The active-site Nucleophile is serine 339. Catalysis depends on charge relay system residues aspartate 403 and histidine 496.

The protein belongs to the AB hydrolase superfamily. Lipase family. As to expression, expressed in pollen grains, pollen tubes, developing embryos, developing seeds and germinating seeds.

The protein resides in the lipid droplet. The protein localises to the membrane. The catalysed reaction is 1,2-di-(9Z-octadecenoyl)-glycerol + (9Z)-octadecenoate + H(+) = 1,2,3-tri-(9Z-octadecenoyl)-glycerol + H2O. It carries out the reaction 1-(9Z-octadecenoyl)-glycerol + H2O = glycerol + (9Z)-octadecenoate + H(+). Its function is as follows. Acid lipase that can hydrolyze a range of triacylglycerols without a clear preference for acyl-chains. Can also cleave 1,2-diacylglycerol, 1,3-diacylglycerol and 1-monoacylglycerol, but not phosphatidylcholine, phosphatidylethanolamine, or sterol esters. Required for pollen tube growth. Triacylglycerol hydrolysis by OBL1 may provide acyl groups for the synthesis of membrane lipids in growing pollen tubes. This chain is Triacylglycerol lipase OBL1, found in Arabidopsis thaliana (Mouse-ear cress).